Here is a 456-residue protein sequence, read N- to C-terminus: Bifunctional protein GlmU (456 aa).

Residues Met-1–Arg-229 form a pyrophosphorylase region. UDP-N-acetyl-alpha-D-glucosamine contacts are provided by residues Leu-11 to Gly-14, Lys-25, Gln-76, Gly-81 to Thr-82, Tyr-103 to Asp-105, Gly-140, Glu-154, Asn-169, and Asn-227. Residue Asp-105 coordinates Mg(2+). A Mg(2+)-binding site is contributed by Asn-227. Residues Leu-230–Ser-250 form a linker region. Residues Gly-251 to Lys-456 form an N-acetyltransferase region. Positions 333 and 351 each coordinate UDP-N-acetyl-alpha-D-glucosamine. The active-site Proton acceptor is His-363. Tyr-366 and Asn-377 together coordinate UDP-N-acetyl-alpha-D-glucosamine. Acetyl-CoA is bound by residues Ala-380, Asn-386 to Tyr-387, Ser-405, Ala-423, and Arg-440.

It in the N-terminal section; belongs to the N-acetylglucosamine-1-phosphate uridyltransferase family. In the C-terminal section; belongs to the transferase hexapeptide repeat family. Homotrimer. The cofactor is Mg(2+).

It is found in the cytoplasm. It carries out the reaction alpha-D-glucosamine 1-phosphate + acetyl-CoA = N-acetyl-alpha-D-glucosamine 1-phosphate + CoA + H(+). The enzyme catalyses N-acetyl-alpha-D-glucosamine 1-phosphate + UTP + H(+) = UDP-N-acetyl-alpha-D-glucosamine + diphosphate. It functions in the pathway nucleotide-sugar biosynthesis; UDP-N-acetyl-alpha-D-glucosamine biosynthesis; N-acetyl-alpha-D-glucosamine 1-phosphate from alpha-D-glucosamine 6-phosphate (route II): step 2/2. Its pathway is nucleotide-sugar biosynthesis; UDP-N-acetyl-alpha-D-glucosamine biosynthesis; UDP-N-acetyl-alpha-D-glucosamine from N-acetyl-alpha-D-glucosamine 1-phosphate: step 1/1. It participates in bacterial outer membrane biogenesis; LPS lipid A biosynthesis. Catalyzes the last two sequential reactions in the de novo biosynthetic pathway for UDP-N-acetylglucosamine (UDP-GlcNAc). The C-terminal domain catalyzes the transfer of acetyl group from acetyl coenzyme A to glucosamine-1-phosphate (GlcN-1-P) to produce N-acetylglucosamine-1-phosphate (GlcNAc-1-P), which is converted into UDP-GlcNAc by the transfer of uridine 5-monophosphate (from uridine 5-triphosphate), a reaction catalyzed by the N-terminal domain. The sequence is that of Bifunctional protein GlmU from Erwinia tasmaniensis (strain DSM 17950 / CFBP 7177 / CIP 109463 / NCPPB 4357 / Et1/99).